The primary structure comprises 740 residues: 1,4-alpha-glucan branching enzyme GlgB (740 aa).

Aspartate 419 acts as the Nucleophile in catalysis. The Proton donor role is filled by glutamate 472.

The protein belongs to the glycosyl hydrolase 13 family. GlgB subfamily. As to quaternary structure, monomer.

The catalysed reaction is Transfers a segment of a (1-&gt;4)-alpha-D-glucan chain to a primary hydroxy group in a similar glucan chain.. It participates in glycan biosynthesis; glycogen biosynthesis. Functionally, catalyzes the formation of the alpha-1,6-glucosidic linkages in glycogen by scission of a 1,4-alpha-linked oligosaccharide from growing alpha-1,4-glucan chains and the subsequent attachment of the oligosaccharide to the alpha-1,6 position. The polypeptide is 1,4-alpha-glucan branching enzyme GlgB (Thiobacillus denitrificans (strain ATCC 25259 / T1)).